The following is a 157-amino-acid chain: MAEVANNEQQAPQFNIQRVYTKDVSFETPNSPAVFQKEWNPEVKLDLDTRSAKLADDVYEVVLSLTVTAQNGGETAFLCEVQQAGIFSIAGLTEPQLAHSLGAYCPNILFPYAREAVGSLVGRGTFPQLNLAPVNFDALFAQYVQQRQAAAAEEANA.

Belongs to the SecB family. As to quaternary structure, homotetramer, a dimer of dimers. One homotetramer interacts with 1 SecA dimer.

The protein resides in the cytoplasm. In terms of biological role, one of the proteins required for the normal export of preproteins out of the cell cytoplasm. It is a molecular chaperone that binds to a subset of precursor proteins, maintaining them in a translocation-competent state. It also specifically binds to its receptor SecA. This is Protein-export protein SecB from Shewanella oneidensis (strain ATCC 700550 / JCM 31522 / CIP 106686 / LMG 19005 / NCIMB 14063 / MR-1).